Here is an 82-residue protein sequence, read N- to C-terminus: Small ribosomal subunit protein bS16 (82 aa).

It belongs to the bacterial ribosomal protein bS16 family.

The polypeptide is Small ribosomal subunit protein bS16 (Klebsiella pneumoniae subsp. pneumoniae (strain ATCC 700721 / MGH 78578)).